We begin with the raw amino-acid sequence, 636 residues long: Chaperone protein HtpG (636 aa).

An a; substrate-binding region spans residues 1–344 (MTLEADKQTH…SADLSLNVSR (344 aa)). A b region spans residues 345 to 561 (EILQSGPVVD…EGDLGLQMRQ (217 aa)). The c stretch occupies residues 562-636 (LLEASGQKVP…LNKLLLELSA (75 aa)).

This sequence belongs to the heat shock protein 90 family. In terms of assembly, homodimer.

It localises to the cytoplasm. Functionally, molecular chaperone. Has ATPase activity. The sequence is that of Chaperone protein HtpG from Xylella fastidiosa (strain Temecula1 / ATCC 700964).